The chain runs to 436 residues: Eukaryotic peptide chain release factor subunit 1 (436 aa).

This sequence belongs to the eukaryotic release factor 1 family. Heterodimer of two subunits, one of which binds GTP.

It localises to the cytoplasm. Directs the termination of nascent peptide synthesis (translation) in response to the termination codons UAA and UAG. In B.musculus UGA codes for tryptophan. In Blepharisma musculus, this protein is Eukaryotic peptide chain release factor subunit 1 (eRF1).